Here is a 386-residue protein sequence, read N- to C-terminus: Phosphate acyltransferase (386 aa).

Residues 359-386 form a disordered region; that stretch reads PHRARQDELGENKVVGADQSMTAKATGT. A compositionally biased stretch (polar residues) spans 377-386; sequence QSMTAKATGT.

This sequence belongs to the PlsX family. Homodimer. Probably interacts with PlsY.

It is found in the cytoplasm. It carries out the reaction a fatty acyl-[ACP] + phosphate = an acyl phosphate + holo-[ACP]. It functions in the pathway lipid metabolism; phospholipid metabolism. Its function is as follows. Catalyzes the reversible formation of acyl-phosphate (acyl-PO(4)) from acyl-[acyl-carrier-protein] (acyl-ACP). This enzyme utilizes acyl-ACP as fatty acyl donor, but not acyl-CoA. This is Phosphate acyltransferase from Beijerinckia indica subsp. indica (strain ATCC 9039 / DSM 1715 / NCIMB 8712).